Reading from the N-terminus, the 593-residue chain is Probable tripeptidyl-peptidase SED3 (593 aa).

Residues 1–18 form the signal peptide; it reads MLLRWHSVIPLFLTMTVA. Residues 19 to 198 constitute a propeptide, removed in mature form; that stretch reads LPNTYRTVVE…SLQVIYSSTN (180 aa). N-linked (GlcNAc...) asparagine glycans are attached at residues N198, N204, N261, and N275. Positions 206–592 constitute a Peptidase S53 domain; the sequence is TITPRCLREL…RILAKIVQHM (387 aa). Active-site charge relay system residues include E282 and D286. Residue N295 is glycosylated (N-linked (GlcNAc...) asparagine). S496 serves as the catalytic Charge relay system. Ca(2+)-binding residues include D538 and I539. N-linked (GlcNAc...) asparagine glycans are attached at residues N554 and N566. Residues G570 and D572 each coordinate Ca(2+).

The cofactor is Ca(2+).

It is found in the secreted. The protein resides in the extracellular space. It catalyses the reaction Release of an N-terminal tripeptide from a polypeptide.. Its function is as follows. Secreted tripeptidyl-peptidase which degrades proteins at acidic pHs and is involved in virulence. This chain is Probable tripeptidyl-peptidase SED3 (SED3), found in Trichophyton verrucosum (strain HKI 0517).